A 360-amino-acid polypeptide reads, in one-letter code: S-adenosylmethionine:tRNA ribosyltransferase-isomerase (360 aa).

This sequence belongs to the QueA family. As to quaternary structure, monomer.

The protein localises to the cytoplasm. The catalysed reaction is 7-aminomethyl-7-carbaguanosine(34) in tRNA + S-adenosyl-L-methionine = epoxyqueuosine(34) in tRNA + adenine + L-methionine + 2 H(+). Its pathway is tRNA modification; tRNA-queuosine biosynthesis. Its function is as follows. Transfers and isomerizes the ribose moiety from AdoMet to the 7-aminomethyl group of 7-deazaguanine (preQ1-tRNA) to give epoxyqueuosine (oQ-tRNA). This chain is S-adenosylmethionine:tRNA ribosyltransferase-isomerase, found in Burkholderia mallei (strain NCTC 10247).